The primary structure comprises 329 residues: Probable nicotianamine synthase 7 (329 aa).

This sequence belongs to the nicotianamine synthase (NAS)-like family.

It catalyses the reaction 3 S-adenosyl-L-methionine = nicotianamine + 3 S-methyl-5'-thioadenosine + 3 H(+). Synthesizes nicotianamine, a polyamine that is the first intermediate in the synthesis of the phytosiderophores of the mugineic acid type found in gramineae which serves as a sensor for the physiological iron status within the plant, and/or might be involved in the transport of iron. The sequence is that of Probable nicotianamine synthase 7 (NAS7) from Hordeum vulgare (Barley).